We begin with the raw amino-acid sequence, 419 residues long: Tol-Pal system protein TolB (419 aa).

A signal peptide spans 1-17; the sequence is MRFIGLVLLLLSVKLFG.

Belongs to the TolB family. In terms of assembly, the Tol-Pal system is composed of five core proteins: the inner membrane proteins TolA, TolQ and TolR, the periplasmic protein TolB and the outer membrane protein Pal. They form a network linking the inner and outer membranes and the peptidoglycan layer.

The protein resides in the periplasm. Functionally, part of the Tol-Pal system, which plays a role in outer membrane invagination during cell division and is important for maintaining outer membrane integrity. The protein is Tol-Pal system protein TolB of Helicobacter hepaticus (strain ATCC 51449 / 3B1).